The sequence spans 641 residues: Bifunctional enzyme NodQ (641 aa).

Residues 1–458 (MSYVQSIPPH…KSARSAMKNQ (458 aa)) form a sulfate adenylyltransferase region. One can recognise a tr-type G domain in the interval 22 to 236 (KSILRFITCG…YLETVELDPT (215 aa)). A G1 region spans residues 31–38 (GSVDDGKS). 31-38 (GSVDDGKS) serves as a coordination point for GTP. The G2 stretch occupies residues 89–93 (GITID). A G3 region spans residues 110 to 113 (DTPG). Residues 110–114 (DTPGH) and 165–168 (NKID) each bind GTP. The interval 165-168 (NKID) is G4. A G5 region spans residues 202–204 (SAR). The interval 459–641 (LPAVLWFTGL…GQMTPLQRPT (183 aa)) is adenylyl-sulfate kinase. 467–474 (GLSGSGKS) provides a ligand contact to ATP. The active-site Phosphoserine intermediate is serine 541.

This sequence in the C-terminal section; belongs to the APS kinase family. In the N-terminal section; belongs to the TRAFAC class translation factor GTPase superfamily. Classic translation factor GTPase family. CysN/NodQ subfamily. In terms of assembly, sulfate-activating enzymes, NodP and NodQ, may be physically associated.

It catalyses the reaction sulfate + ATP + H(+) = adenosine 5'-phosphosulfate + diphosphate. The catalysed reaction is adenosine 5'-phosphosulfate + ATP = 3'-phosphoadenylyl sulfate + ADP + H(+). Functionally, proposed to provide activated sulfate for transfer to Nod factor. ATP sulfurylase may be the GTPase, regulating ATP sulfurylase activity. In terms of biological role, APS kinase catalyzes the synthesis of activated sulfate. The chain is Bifunctional enzyme NodQ (nodQ) from Rhizobium meliloti (strain 1021) (Ensifer meliloti).